The sequence spans 1461 residues: A disintegrin and metalloproteinase with thrombospondin motifs adt-1 (1461 aa).

An N-terminal signal peptide occupies residues 1 to 21 (MPPFYIVITFLLSTVFRISQS). The propeptide occupies 22–163 (VHHHLNEEEL…HLQKERHLVY (142 aa)). N-linked (GlcNAc...) asparagine glycosylation is present at Asn-69. Positions 190–197 (SFCDTSEQ) match the Cysteine switch motif. The N-linked (GlcNAc...) asparagine glycan is linked to Asn-212. Residues 233–435 (ITLEIGLFLD…CSVREFNAFL (203 aa)) form the Peptidase M12B domain. His-388 contacts Zn(2+). The active site involves Glu-389. His-392 and His-398 together coordinate Zn(2+). Cys-405 and Cys-410 are oxidised to a cystine. The Disintegrin domain occupies 464–546 (RLPGQRFTAD…TFGLTPVPID (83 aa)). TSP type-1 domains lie at 708-759 (HQWE…RDCE), 761-802 (FGEW…RPCD), 804-852 (EGCW…QKCI), 853-898 (SQSW…QQCP), 903-952 (LSVW…GPCE), 955-1000 (YLTW…IACL), 1035-1083 (SIHS…NSCL), 1087-1133 (IWSD…PSCS), 1148-1200 (APRW…GSCS), 1203-1260 (AGGW…NVCS), 1265-1321 (DGGW…ARCH), 1324-1378 (DGGW…PACD), and 1382-1435 (DGEW…RQSP). 3 disulfides stabilise this stretch: Cys-719–Cys-751, Cys-723–Cys-758, and Cys-735–Cys-741. Intrachain disulfides connect Cys-816/Cys-846, Cys-820/Cys-851, Cys-831/Cys-836, Cys-862/Cys-892, Cys-866/Cys-897, and Cys-877/Cys-882. 3 cysteine pairs are disulfide-bonded: Cys-1047–Cys-1077, Cys-1051–Cys-1082, and Cys-1062–Cys-1067. 12 cysteine pairs are disulfide-bonded: Cys-1160/Cys-1194, Cys-1162/Cys-1199, Cys-1173/Cys-1184, Cys-1215/Cys-1253, Cys-1219/Cys-1259, Cys-1231/Cys-1243, Cys-1277/Cys-1314, Cys-1281/Cys-1320, Cys-1292/Cys-1304, Cys-1336/Cys-1372, Cys-1340/Cys-1377, and Cys-1351/Cys-1362.

Zn(2+) is required as a cofactor. In hermaphrodites, expressed in the vulva, head ganglia, ventral nerve cord and amphid neurons. Expressed in the rays of the male tail.

It is found in the secreted. In terms of biological role, plays a role in ray morphogenesis in the male tail, probably by remodeling the extracellular matrix (ECM) in the cuticle. This Caenorhabditis elegans protein is A disintegrin and metalloproteinase with thrombospondin motifs adt-1.